The sequence spans 430 residues: Adenylosuccinate synthetase (430 aa).

GTP is bound by residues 13 to 19 (GDEGKGK) and 41 to 43 (GHT). Catalysis depends on aspartate 14, which acts as the Proton acceptor. Residues aspartate 14 and glycine 41 each contribute to the Mg(2+) site. IMP-binding positions include 14–17 (DEGK), 39–42 (NAGH), threonine 130, arginine 144, glutamine 225, threonine 240, and arginine 304. Residue histidine 42 is the Proton donor of the active site. Substrate is bound at residue 300-306 (STTGRAR). GTP contacts are provided by residues arginine 306, 332-334 (KLD), and 414-416 (STG).

Belongs to the adenylosuccinate synthetase family. Homodimer. The cofactor is Mg(2+).

The protein localises to the cytoplasm. The enzyme catalyses IMP + L-aspartate + GTP = N(6)-(1,2-dicarboxyethyl)-AMP + GDP + phosphate + 2 H(+). It participates in purine metabolism; AMP biosynthesis via de novo pathway; AMP from IMP: step 1/2. Functionally, plays an important role in the de novo pathway of purine nucleotide biosynthesis. Catalyzes the first committed step in the biosynthesis of AMP from IMP. The polypeptide is Adenylosuccinate synthetase (Thioalkalivibrio sulfidiphilus (strain HL-EbGR7)).